Consider the following 220-residue polypeptide: MKGIFLVLEGIDGCGKSTQIEHLAQWLPLSGLMPSAAKLFITREPGGTRLGKSLRQLLLGTSPTDESPKPLTELLLYAADRAQHVSQVIQPKINNGDWVISDRFSSSTLAYQGFGRRLDKSLIKELENIATQGITPDLTFLLEIPVSESIKRRENTRKDRIESEGEIFLKRVSDGFSYIAKNDNWLVIPANQKKDIVSKQIENKLINYFQNISSLKNERS.

ATP is bound at residue 10 to 17; the sequence is GIDGCGKS.

This sequence belongs to the thymidylate kinase family.

The enzyme catalyses dTMP + ATP = dTDP + ADP. Functionally, phosphorylation of dTMP to form dTDP in both de novo and salvage pathways of dTTP synthesis. The chain is Thymidylate kinase from Prochlorococcus marinus (strain SARG / CCMP1375 / SS120).